Here is a 233-residue protein sequence, read N- to C-terminus: Cytochrome c oxidase subunit 3 (233 aa).

Helical transmembrane passes span 62-82 (VVLF…AYLI), 98-118 (LELL…FVMH), 135-155 (WFGI…YEYF), and 172-192 (VLTG…LSVL).

It belongs to the cytochrome c oxidase subunit 3 family.

Its subcellular location is the cell membrane. The catalysed reaction is 4 Fe(II)-[cytochrome c] + O2 + 8 H(+)(in) = 4 Fe(III)-[cytochrome c] + 2 H2O + 4 H(+)(out). The protein is Cytochrome c oxidase subunit 3 (ctaE) of Synechocystis sp. (strain ATCC 27184 / PCC 6803 / Kazusa).